Consider the following 501-residue polypeptide: Cytochrome P450 7A1 (501 aa).

Residues 4–24 (IFWIWGICLSVCCCLWLILGL) form a helical membrane-spanning segment. Cys-441 is a binding site for heme.

The protein belongs to the cytochrome P450 family. Requires heme as cofactor. In terms of tissue distribution, detected in liver.

The protein resides in the endoplasmic reticulum membrane. The protein localises to the microsome membrane. It catalyses the reaction cholesterol + reduced [NADPH--hemoprotein reductase] + O2 = 7alpha-hydroxycholesterol + oxidized [NADPH--hemoprotein reductase] + H2O + H(+). The catalysed reaction is 4beta-hydroxycholesterol + reduced [NADPH--hemoprotein reductase] + O2 = 4beta,7alpha-dihydroxycholesterol + oxidized [NADPH--hemoprotein reductase] + H2O + H(+). It carries out the reaction lathosterol + reduced [NADPH--hemoprotein reductase] + O2 = 7alpha,8alpha-epoxy-5alpha-cholestan-3beta-ol + oxidized [NADPH--hemoprotein reductase] + H2O + H(+). The enzyme catalyses lathosterol + reduced [NADPH--hemoprotein reductase] + O2 = 5alpha-cholestan-7-oxo-3beta-ol + oxidized [NADPH--hemoprotein reductase] + H2O + H(+). It catalyses the reaction 7-dehydrocholesterol + reduced [NADPH--hemoprotein reductase] + O2 = 7-oxocholesterol + oxidized [NADPH--hemoprotein reductase] + H2O + H(+). The catalysed reaction is (24S)-hydroxycholesterol + reduced [NADPH--hemoprotein reductase] + O2 = (24S)-7alpha-dihydroxycholesterol + oxidized [NADPH--hemoprotein reductase] + H2O + H(+). It carries out the reaction (24R)-hydroxycholesterol + reduced [NADPH--hemoprotein reductase] + O2 = (24R)-7alpha-dihydroxycholesterol + oxidized [NADPH--hemoprotein reductase] + H2O + H(+). It functions in the pathway lipid metabolism; bile acid biosynthesis. The protein operates within steroid metabolism; cholesterol degradation. A cytochrome P450 monooxygenase involved in the metabolism of endogenous cholesterol and its oxygenated derivatives (oxysterols). Mechanistically, uses molecular oxygen inserting one oxygen atom into a substrate, and reducing the second into a water molecule, with two electrons provided by NADPH via cytochrome P450 reductase (CPR; NADPH-ferrihemoprotein reductase). Functions as a critical regulatory enzyme of bile acid biosynthesis and cholesterol homeostasis. Catalyzes the hydroxylation of carbon hydrogen bond at 7-alpha position of cholesterol, a rate-limiting step in cholesterol catabolism and bile acid biosynthesis. 7-alpha hydroxylates several oxysterols, including 4beta-hydroxycholesterol and 24-hydroxycholesterol. Catalyzes the oxidation of the 7,8 double bond of 7-dehydrocholesterol and lathosterol with direct and predominant formation of the 7-keto derivatives. The protein is Cytochrome P450 7A1 (CYP7A1) of Oryctolagus cuniculus (Rabbit).